We begin with the raw amino-acid sequence, 227 residues long: Cytochrome c oxidase subunit 2 (227 aa).

Residues 1–14 (MAYPVQLGFQDAAS) lie on the Mitochondrial intermembrane side of the membrane. The helical transmembrane segment at 15–45 (PIMEELLYFHDHTLMIMFLISSLVLYIISLM) threads the bilayer. Topologically, residues 46–59 (LTTELMHTNTMDAQ) are mitochondrial matrix. A helical membrane pass occupies residues 60–87 (EVETVWTILPAAILILIALPSLRILYMM). Residues 88-227 (DEITTPSLTL…HFEEWLLSML (140 aa)) lie on the Mitochondrial intermembrane side of the membrane. Residues His-161, Cys-196, Glu-198, Cys-200, His-204, and Met-207 each contribute to the Cu cation site. Residue Glu-198 participates in Mg(2+) binding.

The protein belongs to the cytochrome c oxidase subunit 2 family. In terms of assembly, component of the cytochrome c oxidase (complex IV, CIV), a multisubunit enzyme composed of 14 subunits. The complex is composed of a catalytic core of 3 subunits MT-CO1, MT-CO2 and MT-CO3, encoded in the mitochondrial DNA, and 11 supernumerary subunits COX4I, COX5A, COX5B, COX6A, COX6B, COX6C, COX7A, COX7B, COX7C, COX8 and NDUFA4, which are encoded in the nuclear genome. The complex exists as a monomer or a dimer and forms supercomplexes (SCs) in the inner mitochondrial membrane with NADH-ubiquinone oxidoreductase (complex I, CI) and ubiquinol-cytochrome c oxidoreductase (cytochrome b-c1 complex, complex III, CIII), resulting in different assemblies (supercomplex SCI(1)III(2)IV(1) and megacomplex MCI(2)III(2)IV(2)). Found in a complex with TMEM177, COA6, COX18, COX20, SCO1 and SCO2. Interacts with TMEM177 in a COX20-dependent manner. Interacts with COX20. Interacts with COX16. It depends on Cu cation as a cofactor.

It localises to the mitochondrion inner membrane. It catalyses the reaction 4 Fe(II)-[cytochrome c] + O2 + 8 H(+)(in) = 4 Fe(III)-[cytochrome c] + 2 H2O + 4 H(+)(out). In terms of biological role, component of the cytochrome c oxidase, the last enzyme in the mitochondrial electron transport chain which drives oxidative phosphorylation. The respiratory chain contains 3 multisubunit complexes succinate dehydrogenase (complex II, CII), ubiquinol-cytochrome c oxidoreductase (cytochrome b-c1 complex, complex III, CIII) and cytochrome c oxidase (complex IV, CIV), that cooperate to transfer electrons derived from NADH and succinate to molecular oxygen, creating an electrochemical gradient over the inner membrane that drives transmembrane transport and the ATP synthase. Cytochrome c oxidase is the component of the respiratory chain that catalyzes the reduction of oxygen to water. Electrons originating from reduced cytochrome c in the intermembrane space (IMS) are transferred via the dinuclear copper A center (CU(A)) of subunit 2 and heme A of subunit 1 to the active site in subunit 1, a binuclear center (BNC) formed by heme A3 and copper B (CU(B)). The BNC reduces molecular oxygen to 2 water molecules using 4 electrons from cytochrome c in the IMS and 4 protons from the mitochondrial matrix. The protein is Cytochrome c oxidase subunit 2 (MT-CO2) of Lemur catta (Ring-tailed lemur).